The sequence spans 469 residues: Neuraminidase (469 aa).

Residues 1–9 (MNPNQKIIT) lie on the Intravirion side of the membrane. The chain crosses the membrane as a helical span at residues 10–30 (IGSVSLTIATVCFLMQIAILV). Residues 11-33 (GSVSLTIATVCFLMQIAILVTTV) form an involved in apical transport and lipid raft association region. Over 31 to 469 (TTVTLHFKQH…DGANINFMPI (439 aa)) the chain is Virion surface. The segment at 36 to 88 (HFKQHECDSPASNQVMPCEPIIIERNITEIVYLNNTTIEKEICPKVVEYRNWS) is hypervariable stalk region. N-linked (GlcNAc...) asparagine; by host glycans are attached at residues Asn61, Asn69, Asn70, and Asn86. The segment at 91–469 (QCQITGFAPF…DGANINFMPI (379 aa)) is head of neuraminidase. Disulfide bonds link Cys92/Cys417, Cys124/Cys129, Cys175/Cys193, Cys183/Cys230, Cys232/Cys237, Cys278/Cys291, Cys280/Cys289, Cys318/Cys337, and Cys421/Cys447. Arg118 serves as a coordination point for substrate. N-linked (GlcNAc...) asparagine; by host glycosylation occurs at Asn146. Catalysis depends on Asp151, which acts as the Proton donor/acceptor. Position 152 (Arg152) interacts with substrate. Asn200 and Asn234 each carry an N-linked (GlcNAc...) asparagine; by host glycan. 276–277 (EE) provides a ligand contact to substrate. Position 292 (Arg292) interacts with substrate. Positions 293, 297, and 324 each coordinate Ca(2+). The tract at residues 324-349 (DTPRNDDRSSNSNCRNPNNERGTQGV) is disordered. The segment covering 333–342 (SNSNCRNPNN) has biased composition (low complexity). Residues Gly345, Thr346, and Gln347 each coordinate Ca(2+). Residue Arg371 coordinates substrate. Asn402 carries N-linked (GlcNAc...) asparagine; by host glycosylation. Tyr406 serves as the catalytic Nucleophile.

Belongs to the glycosyl hydrolase 34 family. As to quaternary structure, homotetramer. It depends on Ca(2+) as a cofactor. N-glycosylated.

Its subcellular location is the virion membrane. The protein resides in the host apical cell membrane. The enzyme catalyses Hydrolysis of alpha-(2-&gt;3)-, alpha-(2-&gt;6)-, alpha-(2-&gt;8)- glycosidic linkages of terminal sialic acid residues in oligosaccharides, glycoproteins, glycolipids, colominic acid and synthetic substrates.. With respect to regulation, inhibited by the neuraminidase inhibitors zanamivir (Relenza) and oseltamivir (Tamiflu). These drugs interfere with the release of progeny virus from infected cells and are effective against all influenza strains. Resistance to neuraminidase inhibitors is quite rare. Its function is as follows. Catalyzes the removal of terminal sialic acid residues from viral and cellular glycoconjugates. Cleaves off the terminal sialic acids on the glycosylated HA during virus budding to facilitate virus release. Additionally helps virus spread through the circulation by further removing sialic acids from the cell surface. These cleavages prevent self-aggregation and ensure the efficient spread of the progeny virus from cell to cell. Otherwise, infection would be limited to one round of replication. Described as a receptor-destroying enzyme because it cleaves a terminal sialic acid from the cellular receptors. May facilitate viral invasion of the upper airways by cleaving the sialic acid moieties on the mucin of the airway epithelial cells. Likely to plays a role in the budding process through its association with lipid rafts during intracellular transport. May additionally display a raft-association independent effect on budding. Plays a role in the determination of host range restriction on replication and virulence. Sialidase activity in late endosome/lysosome traffic seems to enhance virus replication. This chain is Neuraminidase, found in Aves (Human).